Here is a 508-residue protein sequence, read N- to C-terminus: Rhamnogalacturonan I rhamnosyltransferase 1 (508 aa).

The chain crosses the membrane as a helical; Signal-anchor for type II membrane protein span at residues 41-63 (LWMIRAVTVLLLWSCFVHLMALG). 3 N-linked (GlcNAc...) asparagine glycosylation sites follow: asparagine 136, asparagine 202, and asparagine 223. 277 to 279 (HLR) contributes to the substrate binding site. Asparagine 391 carries N-linked (GlcNAc...) asparagine glycosylation.

The protein belongs to the glycosyltransferase GT106 family. Highly expressed in siliques. Expressed in stems and flowers. Expressed at low levels in roots and rosette leaves.

The protein localises to the golgi apparatus membrane. The catalysed reaction is alpha-D-galacturonosyl-[(1-&gt;2)-alpha-L-rhamnosyl-(1-&gt;4)-alpha-D-galacturonosyl](n) + UDP-beta-L-rhamnose = [(1-&gt;2)-alpha-L-rhamnosyl-(1-&gt;4)-alpha-D-galacturonosyl](n+1) + UDP + H(+). It participates in glycan metabolism; pectin biosynthesis. In terms of biological role, glycosyltransferase involved in the formation of rhamnogalacturonan I (RG-I) oligosaccharides in the seed coat mucilage, which is a specialized cell wall with abundant RG-I. Transfers the rhamnose residue from UDP-beta-L-rhamnose to RG-I oligosaccharides. Prefers RG-I oligosaccharides with a degree of polymerization of 5 or larger than 5. Does not act on oligosaccharides with a degree of polymerization of 4 or smaller than 4. Does not require metal ions for its activity. The protein is Rhamnogalacturonan I rhamnosyltransferase 1 of Arabidopsis thaliana (Mouse-ear cress).